Here is a 346-residue protein sequence, read N- to C-terminus: tRNA N6-adenosine threonylcarbamoyltransferase (346 aa).

Fe cation contacts are provided by histidine 111 and histidine 115. Substrate-binding positions include 134–138 (LVSGG), aspartate 167, glycine 180, and asparagine 279. Residue aspartate 307 participates in Fe cation binding.

The protein belongs to the KAE1 / TsaD family. Fe(2+) serves as cofactor.

The protein localises to the cytoplasm. It catalyses the reaction L-threonylcarbamoyladenylate + adenosine(37) in tRNA = N(6)-L-threonylcarbamoyladenosine(37) in tRNA + AMP + H(+). In terms of biological role, required for the formation of a threonylcarbamoyl group on adenosine at position 37 (t(6)A37) in tRNAs that read codons beginning with adenine. Is involved in the transfer of the threonylcarbamoyl moiety of threonylcarbamoyl-AMP (TC-AMP) to the N6 group of A37, together with TsaE and TsaB. TsaD likely plays a direct catalytic role in this reaction. The protein is tRNA N6-adenosine threonylcarbamoyltransferase of Burkholderia thailandensis (strain ATCC 700388 / DSM 13276 / CCUG 48851 / CIP 106301 / E264).